A 485-amino-acid chain; its full sequence is Probable glycine dehydrogenase (decarboxylating) subunit 2 (485 aa).

N6-(pyridoxal phosphate)lysine is present on K273.

The protein belongs to the GcvP family. C-terminal subunit subfamily. In terms of assembly, the glycine cleavage system is composed of four proteins: P, T, L and H. In this organism, the P 'protein' is a heterodimer of two subunits. Pyridoxal 5'-phosphate is required as a cofactor.

It carries out the reaction N(6)-[(R)-lipoyl]-L-lysyl-[glycine-cleavage complex H protein] + glycine + H(+) = N(6)-[(R)-S(8)-aminomethyldihydrolipoyl]-L-lysyl-[glycine-cleavage complex H protein] + CO2. The glycine cleavage system catalyzes the degradation of glycine. The P protein binds the alpha-amino group of glycine through its pyridoxal phosphate cofactor; CO(2) is released and the remaining methylamine moiety is then transferred to the lipoamide cofactor of the H protein. The protein is Probable glycine dehydrogenase (decarboxylating) subunit 2 of Oceanobacillus iheyensis (strain DSM 14371 / CIP 107618 / JCM 11309 / KCTC 3954 / HTE831).